Here is a 439-residue protein sequence, read N- to C-terminus: Serine hydroxymethyltransferase (439 aa).

127 to 129 serves as a coordination point for (6S)-5,6,7,8-tetrahydrofolate; that stretch reads AHV. Lys233 is subject to N6-(pyridoxal phosphate)lysine.

Belongs to the SHMT family. As to quaternary structure, homodimer. The cofactor is pyridoxal 5'-phosphate.

Its subcellular location is the cytoplasm. It functions in the pathway amino-acid biosynthesis; glycine biosynthesis; glycine from L-serine: step 1/1. Catalyzes the reversible interconversion of serine and glycine with a modified folate serving as the one-carbon carrier. Also exhibits a pteridine-independent aldolase activity toward beta-hydroxyamino acids, producing glycine and aldehydes, via a retro-aldol mechanism. The sequence is that of Serine hydroxymethyltransferase from Aeropyrum pernix (strain ATCC 700893 / DSM 11879 / JCM 9820 / NBRC 100138 / K1).